A 116-amino-acid polypeptide reads, in one-letter code: Aspartate 1-decarboxylase (116 aa).

The active-site Schiff-base intermediate with substrate; via pyruvic acid is the Ser25. Position 25 is a pyruvic acid (Ser) (Ser25). Thr57 is a binding site for substrate. Residue Tyr58 is the Proton donor of the active site. Residue 73–75 (GAA) participates in substrate binding.

The protein belongs to the PanD family. Heterooctamer of four alpha and four beta subunits. Requires pyruvate as cofactor. Is synthesized initially as an inactive proenzyme, which is activated by self-cleavage at a specific serine bond to produce a beta-subunit with a hydroxyl group at its C-terminus and an alpha-subunit with a pyruvoyl group at its N-terminus.

It is found in the cytoplasm. It carries out the reaction L-aspartate + H(+) = beta-alanine + CO2. It functions in the pathway cofactor biosynthesis; (R)-pantothenate biosynthesis; beta-alanine from L-aspartate: step 1/1. Its function is as follows. Catalyzes the pyruvoyl-dependent decarboxylation of aspartate to produce beta-alanine. This is Aspartate 1-decarboxylase from Leptospira interrogans serogroup Icterohaemorrhagiae serovar Lai (strain 56601).